A 537-amino-acid polypeptide reads, in one-letter code: Cytochrome P450 monooxygenase AOL_s00215g282 (537 aa).

The chain crosses the membrane as a helical span at residues 9-29 (ATVVLCGSIVTVSIAYVIFVV). The N-linked (GlcNAc...) asparagine glycan is linked to N126. C451 serves as a coordination point for heme.

It belongs to the cytochrome P450 family. It depends on heme as a cofactor.

It localises to the membrane. It functions in the pathway secondary metabolite biosynthesis; terpenoid biosynthesis. In terms of biological role, cytochrome P450 monooxygenase; part of the gene cluster that mediates the biosynthesis of sesquiterpenyl epoxy-cyclohexenoids (SECs) such as anthrobotrisins and arthrosporols, metabolites that possess a novel hybrid carbon skeleton consisting of a polyketide-derived epoxycyclohexenol combined with a terpenoid-derived monocyclic sesquiterpenol substructure (PKS-PTS hybrid). The SEC pathway plays an important role for fungal soil colonization via decreasing fungal nematode-capturing ability. Within the pathway, the cytochrome P450 monooxygenase AOL_s00215g282 acts as a m-cresol hydrolase that converts m-cresol to toluquinol. The pathway begins with the biosynthesis of 6-methylsalicylic acid (6-MSA), the first precursor of the polyketide-derived epoxycyclohexenol in arthrosporols, by the polyketide synthase (PKS) AOL_s00215g283 via condensation of 1 acetate and 3 malonate units. The 6-methylsalicylic acid decarboxylase AOL_s00215g281 then catalyzes the decarboxylation of 6-methylsalicylic acid to yield m-cresol. The cytochrome P450 monooxygenase AOL_s00215g282 further oxidizes m-cresol to yield toluquinol. With the assistance of the oxidoreductase AOL_s00215g277, the polyprenyl transferase AOL_s00215g276 catalyzes the farnesylation of toluquinol to produce farnesyl hydroquinone, the hybrid precursor for biosynthesis of SECs. Farnesyl hydroquinone undergoes epoxidation and then subsequent dehydrogenation to form farnesyl epoxy-quinone, the first and simplest SEC. The cytochrome P450 monooxygenase AOL_s00215g278 and the FAD-dependent monooxygenase AOL_s00215g279 might be involved in the oxygenation of the phenol moiety, most likely in the epoxy formation. The cytochrome P450 monooxygenases AOL_s00215g274 and AOL_s00215g280 are involved in specific regional ketone reductions at respectively C-4 and C-1 of farnesyl epoxy-quinone PubMed:33823587. This Arthrobotrys oligospora (strain ATCC 24927 / CBS 115.81 / DSM 1491) (Nematode-trapping fungus) protein is Cytochrome P450 monooxygenase AOL_s00215g282.